We begin with the raw amino-acid sequence, 95 residues long: Aspartyl/glutamyl-tRNA(Asn/Gln) amidotransferase subunit C (95 aa).

The protein belongs to the GatC family. In terms of assembly, heterotrimer of A, B and C subunits.

The catalysed reaction is L-glutamyl-tRNA(Gln) + L-glutamine + ATP + H2O = L-glutaminyl-tRNA(Gln) + L-glutamate + ADP + phosphate + H(+). It carries out the reaction L-aspartyl-tRNA(Asn) + L-glutamine + ATP + H2O = L-asparaginyl-tRNA(Asn) + L-glutamate + ADP + phosphate + 2 H(+). Allows the formation of correctly charged Asn-tRNA(Asn) or Gln-tRNA(Gln) through the transamidation of misacylated Asp-tRNA(Asn) or Glu-tRNA(Gln) in organisms which lack either or both of asparaginyl-tRNA or glutaminyl-tRNA synthetases. The reaction takes place in the presence of glutamine and ATP through an activated phospho-Asp-tRNA(Asn) or phospho-Glu-tRNA(Gln). The protein is Aspartyl/glutamyl-tRNA(Asn/Gln) amidotransferase subunit C of Hyphomonas neptunium (strain ATCC 15444).